Here is a 121-residue protein sequence, read N- to C-terminus: Ribosome-binding factor A (121 aa).

This sequence belongs to the RbfA family. Monomer. Binds 30S ribosomal subunits, but not 50S ribosomal subunits or 70S ribosomes.

The protein resides in the cytoplasm. In terms of biological role, one of several proteins that assist in the late maturation steps of the functional core of the 30S ribosomal subunit. Associates with free 30S ribosomal subunits (but not with 30S subunits that are part of 70S ribosomes or polysomes). Required for efficient processing of 16S rRNA. May interact with the 5'-terminal helix region of 16S rRNA. The protein is Ribosome-binding factor A of Oenococcus oeni (strain ATCC BAA-331 / PSU-1).